An 811-amino-acid polypeptide reads, in one-letter code: Elongation factor G, mitochondrial (811 aa).

A mitochondrion-targeting transit peptide spans 1–64; sequence MSAIARAAAR…FQQSFQRRWA (64 aa). One can recognise a tr-type G domain in the interval 96 to 394; the sequence is RRQRNVGISA…GVCAYLPNPS (299 aa). GTP contacts are provided by residues 105–112, 192–196, and 246–249; these read AHIDSGKT, DTPGH, and NKMD.

The protein belongs to the TRAFAC class translation factor GTPase superfamily. Classic translation factor GTPase family. EF-G/EF-2 subfamily.

The protein localises to the mitochondrion. It participates in protein biosynthesis; polypeptide chain elongation. Mitochondrial GTPase that catalyzes the GTP-dependent ribosomal translocation step during translation elongation. During this step, the ribosome changes from the pre-translocational (PRE) to the post-translocational (POST) state as the newly formed A-site-bound peptidyl-tRNA and P-site-bound deacylated tRNA move to the P and E sites, respectively. Catalyzes the coordinated movement of the two tRNA molecules, the mRNA and conformational changes in the ribosome. The sequence is that of Elongation factor G, mitochondrial from Cryptococcus neoformans var. neoformans serotype D (strain JEC21 / ATCC MYA-565) (Filobasidiella neoformans).